Reading from the N-terminus, the 65-residue chain is Sodium channel neurotoxin MeuNaTxalpha-9 (65 aa).

In terms of domain architecture, LCN-type CS-alpha/beta spans 2-64 (RDGYIANDRN…VPIRIPGECR (63 aa)). Disulfide bonds link C12–C63, C16–C36, C22–C46, and C26–C48. Residue R64 is modified to Arginine amide.

This sequence belongs to the long (4 C-C) scorpion toxin superfamily. Sodium channel inhibitor family. Alpha subfamily. In terms of tissue distribution, expressed by the venom gland.

It localises to the secreted. Its function is as follows. Alpha toxins bind voltage-independently at site-3 of sodium channels (Nav) and inhibit the inactivation of the activated channels, thereby blocking neuronal transmission. This is Sodium channel neurotoxin MeuNaTxalpha-9 from Mesobuthus eupeus (Lesser Asian scorpion).